The primary structure comprises 242 residues: Ribose-5-phosphate isomerase A (242 aa).

Substrate contacts are provided by residues 39–42 (SGST), 95–98 (DGAD), and 108–111 (KGGG). The active-site Proton acceptor is Glu-117. Lys-135 contacts substrate.

It belongs to the ribose 5-phosphate isomerase family. In terms of assembly, homodimer.

It carries out the reaction aldehydo-D-ribose 5-phosphate = D-ribulose 5-phosphate. It participates in carbohydrate degradation; pentose phosphate pathway; D-ribose 5-phosphate from D-ribulose 5-phosphate (non-oxidative stage): step 1/1. Catalyzes the reversible conversion of ribose-5-phosphate to ribulose 5-phosphate. This is Ribose-5-phosphate isomerase A from Chlamydia trachomatis serovar A (strain ATCC VR-571B / DSM 19440 / HAR-13).